We begin with the raw amino-acid sequence, 317 residues long: NADH-ubiquinone oxidoreductase chain 1 (317 aa).

The next 9 membrane-spanning stretches (helical) occupy residues 3-23 (YIELLIMFLSVLLAVAFLTVA), 37-57 (PNAVGYYGILMAIADAAKLLL), 69-89 (LILFVSPMISLISALLCWSVI), 103-123 (GFILTLAISSVGVFGTLLAGW), 141-161 (LISYELVLTTIILLCILIGGT), 173-193 (AIWYGIPLLPLAIIFFIGCVA), 207-227 (SELVSGHMTEYSSSIFVLFFL), 247-267 (GGTGIILGLKANLFAFTYIWV), and 282-302 (LCWMIFLPILFGSAIAVPAYL).

Belongs to the complex I subunit 1 family.

Its subcellular location is the mitochondrion inner membrane. It catalyses the reaction a ubiquinone + NADH + 5 H(+)(in) = a ubiquinol + NAD(+) + 4 H(+)(out). In terms of biological role, core subunit of the mitochondrial membrane respiratory chain NADH dehydrogenase (Complex I) that is believed to belong to the minimal assembly required for catalysis. Complex I functions in the transfer of electrons from NADH to the respiratory chain. The immediate electron acceptor for the enzyme is believed to be ubiquinone. This chain is NADH-ubiquinone oxidoreductase chain 1 (NAD1), found in Candida albicans (strain SC5314 / ATCC MYA-2876) (Yeast).